The sequence spans 127 residues: MQLNMLKSKIHRATVTEANLNYVGSITIDRELMESAHIIEYEKIQVVDIDNGNRLETYVIAGEKGSKVICLNGAAARHVQPGDKVILMTYCQMDEEEAKIHKPIVIFLDENNSIFQITDYEKHGQVK.

S25 serves as the catalytic Schiff-base intermediate with substrate; via pyruvic acid. S25 bears the Pyruvic acid (Ser) mark. T57 serves as a coordination point for substrate. Y58 serves as the catalytic Proton donor. Residue 73 to 75 (GAA) coordinates substrate.

This sequence belongs to the PanD family. As to quaternary structure, heterooctamer of four alpha and four beta subunits. The cofactor is pyruvate. Post-translationally, is synthesized initially as an inactive proenzyme, which is activated by self-cleavage at a specific serine bond to produce a beta-subunit with a hydroxyl group at its C-terminus and an alpha-subunit with a pyruvoyl group at its N-terminus.

It is found in the cytoplasm. It carries out the reaction L-aspartate + H(+) = beta-alanine + CO2. It functions in the pathway cofactor biosynthesis; (R)-pantothenate biosynthesis; beta-alanine from L-aspartate: step 1/1. Functionally, catalyzes the pyruvoyl-dependent decarboxylation of aspartate to produce beta-alanine. The protein is Aspartate 1-decarboxylase of Clostridium kluyveri (strain NBRC 12016).